Consider the following 378-residue polypeptide: tRNA-specific 2-thiouridylase MnmA (378 aa).

Residues 6–13 (AMSGGVDS) and Leu32 contribute to the ATP site. The active-site Nucleophile is the Cys101. Cys101 and Cys199 are joined by a disulfide. ATP is bound at residue Gly125. The interaction with tRNA stretch occupies residues 148 to 150 (KDQ). Cys199 acts as the Cysteine persulfide intermediate in catalysis.

This sequence belongs to the MnmA/TRMU family.

The protein resides in the cytoplasm. It carries out the reaction S-sulfanyl-L-cysteinyl-[protein] + uridine(34) in tRNA + AH2 + ATP = 2-thiouridine(34) in tRNA + L-cysteinyl-[protein] + A + AMP + diphosphate + H(+). Functionally, catalyzes the 2-thiolation of uridine at the wobble position (U34) of tRNA, leading to the formation of s(2)U34. The protein is tRNA-specific 2-thiouridylase MnmA of Micrococcus luteus (strain ATCC 4698 / DSM 20030 / JCM 1464 / CCM 169 / CCUG 5858 / IAM 1056 / NBRC 3333 / NCIMB 9278 / NCTC 2665 / VKM Ac-2230) (Micrococcus lysodeikticus).